A 68-amino-acid polypeptide reads, in one-letter code: Peptide TsPep3 (68 aa).

The signal sequence occupies residues 1-26 (MKLSCGFLLIFLVLSAMIATFSEVEA). Intrachain disulfides connect C30–C38, C33–C54, C37–C47, and C42–C52. Positions 56 to 68 (GRSDLNEEFENYQ) are excised as a propeptide.

As to expression, expressed by the venom gland.

The protein resides in the secreted. Functionally, probable weak potassium channel blocker. The chain is Peptide TsPep3 from Tityus serrulatus (Brazilian scorpion).